Here is a 414-residue protein sequence, read N- to C-terminus: MTSSLVLILAPLALVAIGEAAFGNSSKIFEIPGLEVMASDKYPHFTTIETVSRTKVHRHRREVIAGQIYDWNSYEIPFQIWGGDYNFQSLIRRGIRMWEDSTCLRFKENQQSRDAIRYVLEKGDSCFTEYIGRNGGHQDIIIGSECAEEYVVAHETGHALGFWHTHQRPDRDRHISINWKNVMEEATASFMPFRSMLQAFGIRQVSPRRVPYDYGSLMHYHAVAHAVKVSDFTIVPKELKYVTTMGTEKMAFLDAKVINDIYCPNACQGRNHLNCLAGGYPDPNNCNVCRCPEGLGGPDCGRLQPSPCGGEIHASDQWQTLSSPSGRDVHCYWRISVPEGSRVRFRLSDGEFPCSYGCQSYVEIKHKLDVRLTGFRSCCYRPKEDTVSESNQIFVIYHPNGRTARFSLRFRRQA.

The N-terminal stretch at Met-1 to Ala-20 is a signal peptide. A propeptide spanning residues Ala-21–Arg-61 is cleaved from the precursor. A glycan (N-linked (GlcNAc...) asparagine) is linked at Asn-24. Residues Glu-62–Pro-264 enclose the Peptidase M12A domain. Intrachain disulfides connect Cys-103/Cys-263, Cys-126/Cys-146, Cys-267/Cys-286, Cys-289/Cys-300, Cys-308/Cys-331, and Cys-358/Cys-378. Position 154 (His-154) interacts with Zn(2+). Glu-155 is a catalytic residue. Residues His-158 and His-164 each contribute to the Zn(2+) site. The 57-residue stretch at Ala-251–Pro-307 folds into the EGF-like domain. Positions Cys-308–Ala-414 constitute a CUB domain.

Zn(2+) is required as a cofactor.

It localises to the secreted. Functionally, metalloprotease. The protein is Zinc metalloproteinase nas-26 (toh-1) of Caenorhabditis elegans.